A 178-amino-acid polypeptide reads, in one-letter code: Nicotinamide-nucleotide adenylyltransferase (178 aa).

The protein belongs to the archaeal NMN adenylyltransferase family.

Its subcellular location is the cytoplasm. The catalysed reaction is beta-nicotinamide D-ribonucleotide + ATP + H(+) = diphosphate + NAD(+). The protein operates within cofactor biosynthesis; NAD(+) biosynthesis; NAD(+) from nicotinamide D-ribonucleotide: step 1/1. This Pyrobaculum arsenaticum (strain DSM 13514 / JCM 11321 / PZ6) protein is Nicotinamide-nucleotide adenylyltransferase.